The following is a 145-amino-acid chain: Cytochrome c2 (145 aa).

An N-terminal signal peptide occupies residues 1–21 (MKFQVKALAAIAAFAALPALA). At Gln22 the chain carries Pyrrolidone carboxylic acid. Heme c is bound by residues Cys36, Cys39, His40, and Met121.

Belongs to the cytochrome c family. Post-translationally, binds 1 heme c group covalently per subunit.

Its subcellular location is the periplasm. Functionally, cytochrome c2 is found mainly in purple, non-sulfur, photosynthetic bacteria where it functions as the electron donor to the oxidized bacteriochlorophyll in the photophosphorylation pathway. However, it may also have a role in the respiratory chain and is found in some non-photosynthetic bacteria. The protein is Cytochrome c2 (cycA) of Cereibacter sphaeroides (strain ATCC 17023 / DSM 158 / JCM 6121 / CCUG 31486 / LMG 2827 / NBRC 12203 / NCIMB 8253 / ATH 2.4.1.) (Rhodobacter sphaeroides).